We begin with the raw amino-acid sequence, 227 residues long: GRF-interacting factor 1 (227 aa).

Residues 186–227 are disordered; it reads RSGSGAKEGSTSLSVDVRGGTSSGAQSGDGEYLKVGTEEEGS.

Belongs to the SS18 family. Interacts with several GRFs. Interacts with GRF10. Interacts with GRF1. In terms of tissue distribution, expressed in shoots, aerial roots, ears and tassels. Expressed in the shoot apical meristem (SAM), young leaf primordia, leaf margins, inflorescence meristem, floral meristem and spikelet meristem.

Transcription coactivator that plays a role in the regulation of meristematic function in leaves, stems and inflorescences. Regulates shoot architecture and meristem determinacy. Binds to the inflorescence architecture gene UB3 (unbranched3). Regulates the expression of several genes involved in inflorescence architecture. Component of a network formed by the microRNA396 (miRNA396), the GRFs and their interacting factors (GIFs) acting in the regulation of meristem function, at least partially through the control of cell proliferation. Associates with the core SWI/SNF chromatin-remodeling complex and specific GRFs to tightly regulate the transition between cell division and cell expansion in growing leaves. In Zea mays (Maize), this protein is GRF-interacting factor 1.